Consider the following 104-residue polypeptide: Protein RnfH (104 aa).

Belongs to the UPF0125 (RnfH) family.

The polypeptide is Protein RnfH (Pseudomonas fluorescens (strain ATCC BAA-477 / NRRL B-23932 / Pf-5)).